The primary structure comprises 250 residues: Cell division protein ZapD (250 aa).

This sequence belongs to the ZapD family. Interacts with FtsZ.

Its subcellular location is the cytoplasm. In terms of biological role, cell division factor that enhances FtsZ-ring assembly. Directly interacts with FtsZ and promotes bundling of FtsZ protofilaments, with a reduction in FtsZ GTPase activity. In Serratia proteamaculans (strain 568), this protein is Cell division protein ZapD.